The chain runs to 427 residues: Inward rectifier potassium channel 2 (427 aa).

Topologically, residues 1–81 are cytoplasmic; that stretch reads MGSVRTNRYS…IFTTCVDIRW (81 aa). An S-nitrosocysteine modification is found at Cys-76. A helical membrane pass occupies residues 82–106; it reads RWMLVIFCLAFVLSWLFFGCVFWLI. The Extracellular segment spans residues 107-128; it reads ALLHGDLDASKESKACVSEVNS. Positions 129–140 form an intramembrane region, helical; Pore-forming; it reads FTAAFLFSIETQ. An intramembrane region (pore-forming) is located at residues 141-147; sequence TTIGYGF. The short motif at 142–147 is the Selectivity filter element; sequence TIGYGF. Residues 148-156 lie on the Extracellular side of the membrane; sequence RCVTDECPV. A helical transmembrane segment spans residues 157-178; it reads AVFMVVFQSIVGCIIDAFIIGA. The Cytoplasmic portion of the chain corresponds to 179–427; the sequence is VMAKMAKPKK…PRPLRRESEI (249 aa). The interval 181–208 is polyphosphoinositide (PIP2)-binding; that stretch reads AKMAKPKKRNETLVFSHNAVIAMRDGKL. The interval 384–427 is disordered; it reads SKEEDDSENGVPESTSTDTPPDLDLHNQASVPLEPRPLRRESEI. A PDZ-binding motif is present at residues 425 to 427; sequence SEI.

It belongs to the inward rectifier-type potassium channel (TC 1.A.2.1) family. KCNJ2 subfamily. Homotetramer. Homomultimeric and heteromultimeric association with KCNJ4/Kir2.3. Can form heteromeric channels with Kir2.6/KCNJ18. Associates, via its PDZ-recognition domain, with a complex containing LIN7A, LIN7B, LIN7C, DLG1, CASK and APBA1. S-nitrosylation increases the open probability and inward rectifying currents.

The protein resides in the cell membrane. The protein localises to the sarcolemma. Its subcellular location is the T-tubule. It catalyses the reaction K(+)(in) = K(+)(out). With respect to regulation, activated by phosphatidylinositol 4,5 biphosphate (PtdIns(4,5)P2). Functionally, inward rectifier potassium channels are characterized by a greater tendency to allow potassium to flow into the cell rather than out of it. Their voltage dependence is regulated by the concentration of extracellular potassium; as external potassium is raised, the voltage range of the channel opening shifts to more positive voltages. The inward rectification is mainly due to the blockage of outward current by internal magnesium. Blocked by external barium or cesium. Probably participates in establishing action potential waveform and excitability of neuronal and muscle tissues. The polypeptide is Inward rectifier potassium channel 2 (KCNJ2) (Canis lupus familiaris (Dog)).